Here is a 517-residue protein sequence, read N- to C-terminus: Amidophosphoribosyltransferase (517 aa).

Met-1 carries the N-acetylmethionine modification. A propeptide spanning residues 1 to 11 (MELEESGIREE) is cleaved from the precursor. Catalysis depends on Cys-12, which acts as the Nucleophile. The Glutamine amidotransferase type-2 domain maps to 12–261 (CGVFGCIASG…PGEIVEISRH (250 aa)). Residue Cys-280 coordinates [4Fe-4S] cluster. Ser-327, Asp-389, and Asp-390 together coordinate Mg(2+). [4Fe-4S] cluster contacts are provided by Cys-426, Cys-503, and Cys-506.

In the C-terminal section; belongs to the purine/pyrimidine phosphoribosyltransferase family. Homotetramer. The cofactor is Mg(2+). [4Fe-4S] cluster serves as cofactor. In terms of tissue distribution, expressed at a high level in brain, heart, liver and stomach.

The catalysed reaction is 5-phospho-beta-D-ribosylamine + L-glutamate + diphosphate = 5-phospho-alpha-D-ribose 1-diphosphate + L-glutamine + H2O. The protein operates within purine metabolism; IMP biosynthesis via de novo pathway; N(1)-(5-phospho-D-ribosyl)glycinamide from 5-phospho-alpha-D-ribose 1-diphosphate: step 1/2. With respect to regulation, activated by the substrate 5-phospho-alpha-D-ribosyl-1-pyrophosphate and inhibited by the purine ribonucleotides, the end products of purine biosynthesis. In terms of biological role, catalyzes the formation of phosphoribosylamine from phosphoribosylpyrophosphate (PRPP) and glutamine. The protein is Amidophosphoribosyltransferase (Ppat) of Rattus norvegicus (Rat).